The primary structure comprises 173 residues: Probable chemoreceptor glutamine deamidase CheD 2 (173 aa).

Belongs to the CheD family.

It catalyses the reaction L-glutaminyl-[protein] + H2O = L-glutamyl-[protein] + NH4(+). In terms of biological role, probably deamidates glutamine residues to glutamate on methyl-accepting chemotaxis receptors (MCPs), playing an important role in chemotaxis. The sequence is that of Probable chemoreceptor glutamine deamidase CheD 2 from Albidiferax ferrireducens (strain ATCC BAA-621 / DSM 15236 / T118) (Rhodoferax ferrireducens).